The primary structure comprises 159 residues: Ribonuclease P protein component 2 (159 aa).

It belongs to the eukaryotic/archaeal RNase P protein component 2 family. In terms of assembly, consists of a catalytic RNA component and at least 4-5 protein subunits.

The protein resides in the cytoplasm. It carries out the reaction Endonucleolytic cleavage of RNA, removing 5'-extranucleotides from tRNA precursor.. Part of ribonuclease P, a protein complex that generates mature tRNA molecules by cleaving their 5'-ends. In Halorubrum lacusprofundi (strain ATCC 49239 / DSM 5036 / JCM 8891 / ACAM 34), this protein is Ribonuclease P protein component 2.